Consider the following 407-residue polypeptide: Transmembrane protein 184B (407 aa).

Residues 1 to 28 are compositionally biased toward low complexity; it reads MTVRGAALAPDPASPTTTTASPSVSATP. The segment at 1–31 is disordered; sequence MTVRGAALAPDPASPTTTTASPSVSATPEGS. The next 7 helical transmembrane spans lie at 40–60, 84–104, 121–141, 178–198, 214–234, 249–269, and 290–310; these read FLMT…ALLI, ILFI…FFTN, FVIY…SAIM, LQFC…QAFG, VTII…LFYF, FFMV…LAIL, and VAAG…ALAL. Positions 369-395 are disordered; sequence TLEPGPTWRGGTHSLSRSHSLSGARDN. 3 positions are modified to phosphoserine: Ser388, Ser402, and Ser403.

This sequence belongs to the TMEM184 family.

It localises to the membrane. In terms of biological role, may activate the MAP kinase signaling pathway. The polypeptide is Transmembrane protein 184B (Tmem184b) (Mus musculus (Mouse)).